A 547-amino-acid polypeptide reads, in one-letter code: Immunoglobulin epsilon heavy chain (547 aa).

A Pyrrolidone carboxylic acid modification is found at Q1. Ig-like domains are found at residues Q1–T120, P130–S223, P232–A329, P333–S437, and P443–S542. The variable (V) domain, involved in antigen recognition stretch occupies residues Q1 to S124. 6 disulfide bridges follow: C22-C96, C139-C225, C153-C207, C254-C312, C358-C418, and C464-C524. The tract at residues G125–K547 is constant (C) domain. 7 N-linked (GlcNAc...) asparagine glycosylation sites follow: N145, N173, N219, N265, N371, N383, and N394.

As to quaternary structure, immunoglobulins are composed of two identical heavy chains and two identical light chains; disulfide-linked.

It is found in the secreted. Its subcellular location is the cell membrane. In terms of biological role, immunoglobulins, also known as antibodies, are membrane-bound or secreted glycoproteins produced by B lymphocytes. In the recognition phase of humoral immunity, the membrane-bound immunoglobulins serve as receptors which, upon binding of a specific antigen, trigger the clonal expansion and differentiation of B lymphocytes into immunoglobulins-secreting plasma cells. Secreted immunoglobulins mediate the effector phase of humoral immunity, which results in the elimination of bound antigens. The antigen binding site is formed by the variable domain of one heavy chain, together with that of its associated light chain. Thus, each immunoglobulin has two antigen binding sites with remarkable affinity for a particular antigen. The variable domains are assembled by a process called V-(D)-J rearrangement and can then be subjected to somatic hypermutations which, after exposure to antigen and selection, allow affinity maturation for a particular antigen. The sequence is that of Immunoglobulin epsilon heavy chain from Homo sapiens (Human).